The following is a 109-amino-acid chain: Nucleoid-associated protein BUsg_467 (109 aa).

The protein belongs to the YbaB/EbfC family. Homodimer.

Its subcellular location is the cytoplasm. It localises to the nucleoid. Functionally, binds to DNA and alters its conformation. May be involved in regulation of gene expression, nucleoid organization and DNA protection. The sequence is that of Nucleoid-associated protein BUsg_467 from Buchnera aphidicola subsp. Schizaphis graminum (strain Sg).